An 827-amino-acid polypeptide reads, in one-letter code: Transcription factor SOX-6 (827 aa).

Positions 1-10 (MSSKQATSPF) are enriched in polar residues. The interval 1–51 (MSSKQATSPFACTVDGEETMTQDLTSREKEEGSDQHPASHLPLHPIMHNKP) is disordered. Basic and acidic residues predominate over residues 25–34 (TSREKEEGSD). A Phosphothreonine modification is found at Thr-119. The stretch at 184 to 257 (LAEKERQLST…QHKINLLQQQ (74 aa)) forms a coiled coil. Disordered regions lie at residues 329–360 (HVSHPQINPRLKGISDRLGRNLDPYEHGGGHS) and 380–470 (SPGA…PIGG). Positions 341 to 357 (GISDRLGRNLDPYEHGG) are enriched in basic and acidic residues. Ser-399 is modified (phosphoserine). A Phosphothreonine modification is found at Thr-401. Glycyl lysine isopeptide (Lys-Gly) (interchain with G-Cter in SUMO) cross-links involve residues Lys-404 and Lys-417. Composition is skewed to polar residues over residues 421–431 (TAQPLNLSSRP) and 439–461 (SPTSPTQSLFPASKTSPVNLPNK). A phosphoserine mark is found at Ser-439 and Ser-442. A DNA-binding region (HMG box) is located at residues 620–688 (IKRPMNAFMV…IHLEKYPNYK (69 aa)). Disordered regions lie at residues 752–772 (TPSPQMTSDCSSTSASPEPSL) and 786–827 (ASLA…VSAN). A compositionally biased stretch (acidic residues) spans 795-808 (NGEDEMEAYDDYED).

In terms of assembly, homodimer. Interacts with DAZAP2. May interact with CENPK. In terms of processing, sumoylation inhibits the transcriptional activity.

Its subcellular location is the nucleus. It localises to the cytoplasm. Functionally, transcription factor that plays a key role in several developmental processes, including neurogenesis, chondrocytes differentiation and cartilage formation. Specifically binds the 5'-AACAAT-3' DNA motif present in enhancers and super-enhancers and promotes expression of genes important for chondrogenesis. Required for overt chondrogenesis when condensed prechondrocytes differentiate into early stage chondrocytes: SOX5 and SOX6 cooperatively bind with SOX9 on active enhancers and super-enhancers associated with cartilage-specific genes, and thereby potentiate SOX9's ability to transactivate. Not involved in precartilaginous condensation, the first step in chondrogenesis, during which skeletal progenitors differentiate into prechondrocytes. Together with SOX5, required to form and maintain a pool of highly proliferating chondroblasts between epiphyses and metaphyses, to form columnar chondroblasts, delay chondrocyte prehypertrophy but promote hypertrophy, and to delay terminal differentiation of chondrocytes on contact with ossification fronts. Binds to the proximal promoter region of the myelin protein MPZ gene, and is thereby involved in the differentiation of oligodendroglia in the developing spinal tube. Binds to the gene promoter of MBP and acts as a transcriptional repressor. The sequence is that of Transcription factor SOX-6 from Rattus norvegicus (Rat).